The following is a 770-amino-acid chain: DEAD-box ATP-dependent RNA helicase 24 (770 aa).

A disordered region spans residues 1 to 106 (MSKRPKLGGF…ADSDDEDDPV (106 aa)). The segment covering 14-26 (RPTSYSFERSQPP) has biased composition (polar residues). The span at 34–43 (DDPDLDDIAF) shows a compositional bias: acidic residues. Residues 44 to 55 (SDDAAAPSDAPP) are compositionally biased toward low complexity. The short motif at 219-247 (KSFADCGFPVQLMNAIAKQGYEKPTTIQC) is the Q motif element. Residues 250-425 (LPIVLSGRDI…REILTDPIRV (176 aa)) enclose the Helicase ATP-binding domain. 263–270 (AKTGSGKT) is a binding site for ATP. Residues 373–376 (DEAD) carry the DEAD box motif. The 164-residue stretch at 436–599 (DIKQVVNVLP…DVPNELMDLA (164 aa)) folds into the Helicase C-terminal domain. Positions 604–613 (RFRANRDSRK) are enriched in basic and acidic residues. Disordered regions lie at residues 604-640 (RFRA…RGRG), 683-704 (VSAS…PSSF), and 729-770 (LPAP…GWDR). Over residues 621 to 635 (GKGGGGGGGGGSGAR) the composition is skewed to gly residues. Low complexity predominate over residues 683 to 697 (VSASSSNTPSNSAPS). Positions 744-753 (TVENANPNPE) are enriched in polar residues. Positions 754 to 770 (SSRDRTRERKRPSGWDR) are enriched in basic and acidic residues.

It belongs to the DEAD box helicase family.

It carries out the reaction ATP + H2O = ADP + phosphate + H(+). The chain is DEAD-box ATP-dependent RNA helicase 24 from Oryza sativa subsp. japonica (Rice).